Here is a 372-residue protein sequence, read N- to C-terminus: tRNA-specific 2-thiouridylase MnmA (372 aa).

Residues 16-23 (GMSGGVDS) and M42 each bind ATP. An interaction with target base in tRNA region spans residues 102-104 (NPD). C107 (nucleophile) is an active-site residue. C107 and C205 are joined by a disulfide. G132 serves as a coordination point for ATP. Residues 155-157 (KDQ) are interaction with tRNA. The active-site Cysteine persulfide intermediate is the C205. Positions 317-318 (RY) are interaction with tRNA.

This sequence belongs to the MnmA/TRMU family.

Its subcellular location is the cytoplasm. It carries out the reaction S-sulfanyl-L-cysteinyl-[protein] + uridine(34) in tRNA + AH2 + ATP = 2-thiouridine(34) in tRNA + L-cysteinyl-[protein] + A + AMP + diphosphate + H(+). In terms of biological role, catalyzes the 2-thiolation of uridine at the wobble position (U34) of tRNA, leading to the formation of s(2)U34. This chain is tRNA-specific 2-thiouridylase MnmA, found in Shewanella denitrificans (strain OS217 / ATCC BAA-1090 / DSM 15013).